We begin with the raw amino-acid sequence, 491 residues long: Probable succinate-semialdehyde dehydrogenase [NADP(+)] (491 aa).

Residues 163–164, 187–190, and 241–242 each bind NADP(+); these read WN, KPAE, and GS. Catalysis depends on Glu263, which acts as the Proton acceptor. Residue Leu264 coordinates NADP(+). Cys297 (nucleophile) is an active-site residue. An NADP(+)-binding site is contributed by Glu394.

It belongs to the aldehyde dehydrogenase family.

The enzyme catalyses succinate semialdehyde + NADP(+) + H2O = succinate + NADPH + 2 H(+). It participates in amino-acid degradation; 4-aminobutanoate degradation. Functionally, catalyzes the NADP(+) dependent oxidation of succinate semialdehyde to succinate. This chain is Probable succinate-semialdehyde dehydrogenase [NADP(+)] (gabD), found in Sinorhizobium fredii (strain NBRC 101917 / NGR234).